The following is a 467-amino-acid chain: Protein PHOSPHATE STARVATION RESPONSE 3 (467 aa).

A disordered region spans residues 227–266 (MSLPVSSCSDQEDLQDARSPAKVQLSSSRSSSGTASCNKP). In terms of domain architecture, HTH myb-type spans 262 to 322 (SCNKPRLRWT…HLQKYRLAKY (61 aa)). A DNA-binding region (H-T-H motif) is located at residues 293-318 (PKGVLKLMKVEGLTIYHIKSHLQKYR). Residues 327-337 (KEDKKQEEKKT) are compositionally biased toward basic and acidic residues. Disordered stretches follow at residues 327–353 (KEDK…KSAQ) and 400–467 (RESI…VHDE). Positions 402-412 (SISSMTSTTEG) are enriched in polar residues. Basic and acidic residues-rich tracts occupy residues 419-428 (PMEKTEDKAE) and 438-467 (RITD…VHDE).

As to expression, expressed in the root cap and in the exodermis of the root, in the root tip of lateral roots, in the mesophyll cells of the leaf, in pollen, vascular cylinder of the anther and the veins of the lemma, palea and pistils, and in the xylem and phloem regions of large vascular bundles, small vascular bundles and diffuse vascular bundles in node I.

The protein localises to the nucleus. Functionally, transcription factor involved in phosphate starvation signaling. Binds to P1BS, an imperfect palindromic sequence 5'-GNATATNC-3', to promote the expression of inorganic phosphate (Pi) starvation-responsive genes. Functionally redundant with PHR1 and PHR2 in regulating Pi starvation response and Pi homeostasis. This is Protein PHOSPHATE STARVATION RESPONSE 3 from Oryza sativa subsp. japonica (Rice).